Reading from the N-terminus, the 203-residue chain is UDP-N-acetylglucosamine transferase subunit ALG13 (203 aa).

The protein belongs to the glycosyltransferase 28 family. As to quaternary structure, heterodimer with ALG14 to form a functional enzyme.

The protein localises to the endoplasmic reticulum. The catalysed reaction is an N-acetyl-alpha-D-glucosaminyl-diphospho-di-trans,poly-cis-dolichol + UDP-N-acetyl-alpha-D-glucosamine = an N,N'-diacetylchitobiosyl-diphospho-di-trans,poly-cis-dolichol + UDP + H(+). Its function is as follows. Involved in protein N-glycosylation. Essential for the second step of the dolichol-linked oligosaccharide pathway. This Eremothecium gossypii (strain ATCC 10895 / CBS 109.51 / FGSC 9923 / NRRL Y-1056) (Yeast) protein is UDP-N-acetylglucosamine transferase subunit ALG13 (ALG13).